A 92-amino-acid polypeptide reads, in one-letter code: Small ribosomal subunit protein uS19c (92 aa).

Belongs to the universal ribosomal protein uS19 family.

The protein localises to the plastid. Its subcellular location is the chloroplast. Protein S19 forms a complex with S13 that binds strongly to the 16S ribosomal RNA. This chain is Small ribosomal subunit protein uS19c, found in Eucalyptus globulus subsp. globulus (Tasmanian blue gum).